Here is a 180-residue protein sequence, read N- to C-terminus: Cytokinin-beta-glucosidase 1 (180 aa).

Its function is as follows. Hydrolyzes cytokinin glucosides thus liberating free cytokinins. This Panax ginseng (Korean ginseng) protein is Cytokinin-beta-glucosidase 1 (ROLC1).